The following is a 523-amino-acid chain: Pentatricopeptide repeat-containing protein At1g64580 (523 aa).

13 PPR repeats span residues 43 to 77 (HHHH…RPIP), 78 to 112 (SIVD…GISH), 113 to 147 (DLYS…GFRP), 148 to 182 (SIVT…GFVP), 183 to 217 (NVVI…GIRA), 218 to 252 (DAVT…KIDP), 253 to 287 (NVIF…SVVP), 288 to 322 (NVFT…GCFP), 323 to 357 (DVVT…GLVG), 358 to 392 (DAFT…GVSP), 393 to 427 (DIVT…EMDV), 428 to 462 (DIIT…GVKP), and 463 to 497 (DAIA…GFMP).

Belongs to the PPR family. P subfamily.

The sequence is that of Pentatricopeptide repeat-containing protein At1g64580 from Arabidopsis thaliana (Mouse-ear cress).